The sequence spans 359 residues: Probable dual-specificity RNA methyltransferase RlmN (359 aa).

Glutamate 93 acts as the Proton acceptor in catalysis. The 231-residue stretch at 107 to 337 (KSERVTLCVS…VTMRYEKGHD (231 aa)) folds into the Radical SAM core domain. The cysteines at positions 114 and 342 are disulfide-linked. [4Fe-4S] cluster is bound by residues cysteine 121, cysteine 125, and cysteine 128. S-adenosyl-L-methionine is bound by residues 168-169 (GE), serine 200, 223-225 (SLH), and asparagine 299. Cysteine 342 (S-methylcysteine intermediate) is an active-site residue.

This sequence belongs to the radical SAM superfamily. RlmN family. The cofactor is [4Fe-4S] cluster.

It localises to the cytoplasm. It catalyses the reaction adenosine(2503) in 23S rRNA + 2 reduced [2Fe-2S]-[ferredoxin] + 2 S-adenosyl-L-methionine = 2-methyladenosine(2503) in 23S rRNA + 5'-deoxyadenosine + L-methionine + 2 oxidized [2Fe-2S]-[ferredoxin] + S-adenosyl-L-homocysteine. The catalysed reaction is adenosine(37) in tRNA + 2 reduced [2Fe-2S]-[ferredoxin] + 2 S-adenosyl-L-methionine = 2-methyladenosine(37) in tRNA + 5'-deoxyadenosine + L-methionine + 2 oxidized [2Fe-2S]-[ferredoxin] + S-adenosyl-L-homocysteine. In terms of biological role, specifically methylates position 2 of adenine 2503 in 23S rRNA and position 2 of adenine 37 in tRNAs. The protein is Probable dual-specificity RNA methyltransferase RlmN of Akkermansia muciniphila (strain ATCC BAA-835 / DSM 22959 / JCM 33894 / BCRC 81048 / CCUG 64013 / CIP 107961 / Muc).